Consider the following 247-residue polypeptide: GTP cyclohydrolase 1 type 2 homolog (247 aa).

5 residues coordinate a divalent metal cation: histidine 63, histidine 64, aspartate 101, histidine 215, and glutamate 219.

Belongs to the GTP cyclohydrolase I type 2/NIF3 family. Homohexamer.

The sequence is that of GTP cyclohydrolase 1 type 2 homolog from Buchnera aphidicola subsp. Acyrthosiphon pisum (strain APS) (Acyrthosiphon pisum symbiotic bacterium).